Reading from the N-terminus, the 74-residue chain is UPF0346 protein SE_1114 (74 aa).

Belongs to the UPF0346 family.

The chain is UPF0346 protein SE_1114 from Staphylococcus epidermidis (strain ATCC 12228 / FDA PCI 1200).